Here is a 166-residue protein sequence, read N- to C-terminus: UPF0336 protein MT0525.1 (166 aa).

The MaoC-like domain occupies 8 to 131 (QTLIGKHYRA…VLAEIRSEVT (124 aa)).

The protein belongs to the UPF0336 family.

This Mycobacterium tuberculosis (strain CDC 1551 / Oshkosh) protein is UPF0336 protein MT0525.1.